We begin with the raw amino-acid sequence, 155 residues long: NADH-ubiquinone oxidoreductase chain 6 (155 aa).

4 consecutive transmembrane segments (helical) span residues Met24–Phe44, Tyr51–Ile71, Ala88–Gly108, and Ile118–Val138.

This sequence belongs to the complex I subunit 6 family.

It localises to the mitochondrion membrane. The enzyme catalyses a ubiquinone + NADH + 5 H(+)(in) = a ubiquinol + NAD(+) + 4 H(+)(out). Functionally, core subunit of the mitochondrial membrane respiratory chain NADH dehydrogenase (Complex I) that is believed to belong to the minimal assembly required for catalysis. Complex I functions in the transfer of electrons from NADH to the respiratory chain. The immediate electron acceptor for the enzyme is believed to be ubiquinone. The protein is NADH-ubiquinone oxidoreductase chain 6 (ND6) of Albinaria caerulea (Land snail).